A 92-amino-acid chain; its full sequence is UPF0250 protein XOO3732 (92 aa).

Belongs to the UPF0250 family.

The chain is UPF0250 protein XOO3732 from Xanthomonas oryzae pv. oryzae (strain MAFF 311018).